Here is a 604-residue protein sequence, read N- to C-terminus: Putative O-acetyltransferase SACOL0978 (604 aa).

The next 11 helical transmembrane spans lie at 15–35 (YIPGLDGLRAIAVLGIIIYHL), 43–63 (GFLGVDTFFVISGYLITSLLL), 85–105 (LLPAVIVLLMVVGTATLLLKS), 150–170 (AIEEQFYIFFPVILVTLLLTI), 176–196 (IGFIFWGVSIISLGLMMFIYS), 212–232 (LQTLLLGVILAFLWPPFKLKN), 240–260 (YVIDSIGSLSFIVLILLFFII), 267–287 (IYDGGFYLISILTLFIIASVV), 310–330 (YSLYLWHFAVISFVHSYYVDG), 332–352 (IPVYVYFIDISLTIIFAELSY), and 377–397 (FIRMAIVVTLLIPFMLILVGA). Catalysis depends on residues serine 459, aspartate 581, and histidine 584.

This sequence belongs to the acyltransferase 3 family.

The protein localises to the cell membrane. This chain is Putative O-acetyltransferase SACOL0978, found in Staphylococcus aureus (strain COL).